Reading from the N-terminus, the 133-residue chain is Putative esterase STK_17900 (133 aa).

This sequence belongs to the thioesterase PaaI family.

The polypeptide is Putative esterase STK_17900 (Sulfurisphaera tokodaii (strain DSM 16993 / JCM 10545 / NBRC 100140 / 7) (Sulfolobus tokodaii)).